The primary structure comprises 228 residues: MSVYSLPPAPPTDEHQLFQRAEALSGFTLGELASKAGWNIPADLKRIKGWVGMLLEFYLGASAGSKPEQDFADIGIELKTIPISAQGKPLETTFVCVAPLTGNSGITWESSHVRHKLARVLWVPVEGERQIPLAQRRVGAPLLWSPNEEEEELLRRDWEELMDLIVLGKVETITARHGEVLQLRPKAANSRALTEAIGEHGQPIMTLPRGFYLKKTFTGPMLARHFLL.

This sequence belongs to the MutH family.

It is found in the cytoplasm. Sequence-specific endonuclease that cleaves unmethylated GATC sequences. It is involved in DNA mismatch repair. This Yersinia enterocolitica serotype O:8 / biotype 1B (strain NCTC 13174 / 8081) protein is DNA mismatch repair protein MutH.